Here is a 251-residue protein sequence, read N- to C-terminus: Imidazole glycerol phosphate synthase subunit HisF (251 aa).

Residues Asp11 and Asp130 contribute to the active site.

It belongs to the HisA/HisF family. In terms of assembly, heterodimer of HisH and HisF.

It is found in the cytoplasm. The enzyme catalyses 5-[(5-phospho-1-deoxy-D-ribulos-1-ylimino)methylamino]-1-(5-phospho-beta-D-ribosyl)imidazole-4-carboxamide + L-glutamine = D-erythro-1-(imidazol-4-yl)glycerol 3-phosphate + 5-amino-1-(5-phospho-beta-D-ribosyl)imidazole-4-carboxamide + L-glutamate + H(+). It participates in amino-acid biosynthesis; L-histidine biosynthesis; L-histidine from 5-phospho-alpha-D-ribose 1-diphosphate: step 5/9. In terms of biological role, IGPS catalyzes the conversion of PRFAR and glutamine to IGP, AICAR and glutamate. The HisF subunit catalyzes the cyclization activity that produces IGP and AICAR from PRFAR using the ammonia provided by the HisH subunit. This is Imidazole glycerol phosphate synthase subunit HisF from Chlorobium luteolum (strain DSM 273 / BCRC 81028 / 2530) (Pelodictyon luteolum).